Consider the following 270-residue polypeptide: uncharacterized protein (270 aa).

The ABC transporter domain occupies 34-266 (LIARGLTKSY…PDVRRLYLGD (233 aa)). 66–73 (GPNGAGKT) contacts ATP.

The protein belongs to the ABC transporter superfamily.

This is an uncharacterized protein from Rhizobium meliloti (strain 1021) (Ensifer meliloti).